We begin with the raw amino-acid sequence, 226 residues long: Small ribosomal subunit protein uS2c (226 aa).

It belongs to the universal ribosomal protein uS2 family.

It localises to the plastid. The protein resides in the chloroplast. The polypeptide is Small ribosomal subunit protein uS2c (rps2) (Phaeodactylum tricornutum (strain CCAP 1055/1)).